The chain runs to 364 residues: Probable tartrate dehydrogenase/decarboxylase TtuC (364 aa).

Residues aspartate 222, aspartate 246, and aspartate 250 each coordinate Mn(2+).

Belongs to the isocitrate and isopropylmalate dehydrogenases family. Mg(2+) is required as a cofactor. The cofactor is Mn(2+). K(+) serves as cofactor.

It localises to the cytoplasm. The catalysed reaction is tartrate + NAD(+) = 2-hydroxy-3-oxosuccinate + NADH + H(+). The enzyme catalyses (2R,3S)-tartrate + NAD(+) = 2-hydroxy-3-oxosuccinate + NADH + H(+). It catalyses the reaction (2R,3R)-tartrate + NAD(+) = 2-hydroxy-3-oxosuccinate + NADH + H(+). It carries out the reaction (2R,3R)-tartrate + H(+) = (R)-glycerate + CO2. The catalysed reaction is (R)-malate + NAD(+) = pyruvate + CO2 + NADH. Its pathway is carbohydrate acid metabolism; tartrate degradation; 2-hydroxy-3-oxosuccinate from L-tartrate: step 1/1. It participates in carbohydrate acid metabolism; tartrate degradation; 2-hydroxy-3-oxosuccinate from meso-tartrate: step 1/1. It functions in the pathway carbohydrate acid metabolism; tartrate degradation; D-glycerate from L-tartrate: step 1/1. Has multiple catalytic activities. Apart from catalyzing the oxidation of (+)-tartrate to oxaloglycolate, also converts meso-tartrate to D-glycerate and catalyzes the oxidative decarboxylation of D-malate to pyruvate. The chain is Probable tartrate dehydrogenase/decarboxylase TtuC (ttuC) from Agrobacterium vitis (Rhizobium vitis).